Reading from the N-terminus, the 277-residue chain is Zinc finger protein 511 (277 aa).

C2H2-type zinc fingers lie at residues 96–121 (FRCH…NALH), 123–146 (NVCS…LEWH), and 160–185 (YECL…IRTH). Positions 225-244 (ESSESMDFSLTPEPVETEPM) are disordered.

Belongs to the krueppel C2H2-type zinc-finger protein family.

It is found in the nucleus. Its function is as follows. May be involved in transcriptional regulation. In Danio rerio (Zebrafish), this protein is Zinc finger protein 511 (znf511).